The chain runs to 540 residues: DM7 family protein GD24576 (540 aa).

A disordered region spans residues 416–443 (ATDTRGRDEIRTSCDQSQEKDEGSAEAD). Positions 417 to 443 (TDTRGRDEIRTSCDQSQEKDEGSAEAD) are enriched in basic and acidic residues.

It belongs to the DM7 family.

The chain is DM7 family protein GD24576 from Drosophila simulans (Fruit fly).